The chain runs to 325 residues: Chain length determinant protein (325 aa).

Residues 1–31 (MRVENNNVSGQNLDPEQIDLIDLLVQLWRGK) lie on the Cytoplasmic side of the membrane. Residues 32-52 (MTIIISVIVAIVLAIGYLVVA) form a helical membrane-spanning segment. Residues 53–294 (KEKWTSTAIV…LPIRRDSPKK (242 aa)) are Periplasmic-facing. The chain crosses the membrane as a helical span at residues 295–315 (AITLILAVLLGGMVGAGIVLG). The Cytoplasmic portion of the chain corresponds to 316–325 (RNALRNYNAK).

The protein belongs to the WzzB/Cld/Rol family.

The protein resides in the cell inner membrane. The protein operates within bacterial outer membrane biogenesis; lipopolysaccharide biosynthesis. Functionally, confers a modal distribution of chain length on the O-antigen component of lipopolysaccharide (LPS). Gives rise to a reduced number of short chain molecules and increases in numbers of longer molecules, with a modal value of 13 (in strain O111/M92) and of 17 (in strain K12). The chain is Chain length determinant protein (wzzB) from Escherichia coli.